Consider the following 331-residue polypeptide: Probable allantoicase (331 aa).

It belongs to the allantoicase family.

It carries out the reaction allantoate + H2O = (S)-ureidoglycolate + urea. It functions in the pathway nitrogen metabolism; (S)-allantoin degradation; (S)-ureidoglycolate from allantoate (aminidohydrolase route): step 1/1. This chain is Probable allantoicase, found in Pseudomonas fluorescens (strain Pf0-1).